A 374-amino-acid polypeptide reads, in one-letter code: Glutamate 5-kinase (374 aa).

Lys-16 lines the ATP pocket. Residues Ser-56, Asp-143, and Asn-155 each contribute to the substrate site. 175–176 is a binding site for ATP; that stretch reads TD. In terms of domain architecture, PUA spans 282–360; sequence RGRVVLDAGA…SEIEAVLGYV (79 aa).

The protein belongs to the glutamate 5-kinase family.

Its subcellular location is the cytoplasm. The catalysed reaction is L-glutamate + ATP = L-glutamyl 5-phosphate + ADP. The protein operates within amino-acid biosynthesis; L-proline biosynthesis; L-glutamate 5-semialdehyde from L-glutamate: step 1/2. Catalyzes the transfer of a phosphate group to glutamate to form L-glutamate 5-phosphate. The polypeptide is Glutamate 5-kinase (Ralstonia nicotianae (strain ATCC BAA-1114 / GMI1000) (Ralstonia solanacearum)).